The sequence spans 396 residues: MMKTVNELIKDINSLTSHLHEKDFLLTWEQTPDELKQVLDVAAALKALRAENISTKVFNSGLGISVFRDNSTRTRFSYASALNLLGLAQQDLDEGKSQIAHGETVRETANMISFCADAIGIRDDMYLGAGNAYMREVGAALDDGYKQGVLPQRPALVNLQCDIDHPTQSMADLAWLREHFGSLENLKGKKIAMTWAYSPSYGKPLSVPQGIIGLMTRFGMDVTLAHPEGYDLIPDVVEVAKNNAKASGGSFRQVTSMEEAFKDADIVYPKSWAPYKVMEERTELLRANDHEGLKALEKQCLAQNAQHKDWHCTEEMMELTRDGEALYMHCLPADISGVSCKEGEVTEGVFEKYRIATYKEASWKPYIIAAMILSRKYAKPGALLEQLLKEAQERVK.

Residues 71 to 74 (STRT), Gln-98, 165 to 168 (HPTQ), and 330 to 331 (CL) each bind carbamoyl phosphate.

This sequence belongs to the aspartate/ornithine carbamoyltransferase superfamily. Homotrimer.

In Escherichia coli O6:H1 (strain CFT073 / ATCC 700928 / UPEC), this protein is Putative carbamoyltransferase YgeW (ygeW).